Consider the following 330-residue polypeptide: Ferredoxin--NADP reductase (330 aa).

The FAD site is built by glutamate 35, glutamine 43, tyrosine 48, valine 90, phenylalanine 123, aspartate 285, and threonine 326.

Belongs to the ferredoxin--NADP reductase type 2 family. In terms of assembly, homodimer. FAD serves as cofactor.

The enzyme catalyses 2 reduced [2Fe-2S]-[ferredoxin] + NADP(+) + H(+) = 2 oxidized [2Fe-2S]-[ferredoxin] + NADPH. This chain is Ferredoxin--NADP reductase, found in Streptococcus pyogenes serotype M2 (strain MGAS10270).